The primary structure comprises 268 residues: Thiazole synthase (268 aa).

The Schiff-base intermediate with DXP role is filled by K108. 1-deoxy-D-xylulose 5-phosphate contacts are provided by residues G169, 195–196, and 217–218; these read AG and NS. Residues 248-268 form a disordered region; that stretch reads RLKENPLASPSSPLDGVISNN. The segment covering 255–268 has biased composition (polar residues); it reads ASPSSPLDGVISNN.

Belongs to the ThiG family. Homotetramer. Forms heterodimers with either ThiH or ThiS.

The protein localises to the cytoplasm. The catalysed reaction is [ThiS sulfur-carrier protein]-C-terminal-Gly-aminoethanethioate + 2-iminoacetate + 1-deoxy-D-xylulose 5-phosphate = [ThiS sulfur-carrier protein]-C-terminal Gly-Gly + 2-[(2R,5Z)-2-carboxy-4-methylthiazol-5(2H)-ylidene]ethyl phosphate + 2 H2O + H(+). The protein operates within cofactor biosynthesis; thiamine diphosphate biosynthesis. Catalyzes the rearrangement of 1-deoxy-D-xylulose 5-phosphate (DXP) to produce the thiazole phosphate moiety of thiamine. Sulfur is provided by the thiocarboxylate moiety of the carrier protein ThiS. In vitro, sulfur can be provided by H(2)S. This is Thiazole synthase from Prochlorococcus marinus (strain NATL2A).